We begin with the raw amino-acid sequence, 256 residues long: MGYLKRIGMCISLLIVIIFVTSCGGGNKITGDSKETQIKKSFAKTLDMYPIKNLEDLYDKEGYRDGEFEKGDKGMWTIYTDFAKSNKSDELDDEGMVLNLDRNTRTAKGYYFVKKFYEKDKFSDRKNYKVEMKNNKIILLDKVNDPNLKERIENFKFFGQYANFKDLENYNNGDVSINWNVPSYDVEYKMSNKDENVKQLRSRYNIPTDKAPMLKMHIDGDLKGSSVGYKRLEIDFSKEDRDISVIDYLSYKPAKK.

The N-terminal stretch at 1–22 (MGYLKRIGMCISLLIVIIFVTS) is a signal peptide. Cys23 is lipidated: N-palmitoyl cysteine. The S-diacylglycerol cysteine moiety is linked to residue Cys23.

The protein belongs to the staphylococcal tandem lipoprotein family.

It is found in the cell membrane. This is an uncharacterized protein from Staphylococcus aureus (strain MRSA252).